Here is an 84-residue protein sequence, read N- to C-terminus: Three-finger toxin 3FTx-1 (84 aa).

The N-terminal stretch at 1–21 (MKTLLLTLVVVTIVCLDLGNS) is a signal peptide. Cystine bridges form between Cys24–Cys41, Cys34–Cys59, Cys63–Cys71, and Cys72–Cys77. Residue Asn78 is glycosylated (N-linked (GlcNAc...) asparagine).

The protein belongs to the three-finger toxin family. Short-chain subfamily. As to expression, expressed by the venom gland.

It is found in the secreted. The sequence is that of Three-finger toxin 3FTx-1 from Micrurus corallinus (Brazilian coral snake).